Consider the following 1038-residue polypeptide: E3 ubiquitin-protein ligase Topors (1038 aa).

The tract at residues 53–96 (ESGSESGDNEAEEPVSAGPDNANAIGEPGTSASAAEENGTVERN) is disordered. The RING-type zinc-finger motif lies at 102–141 (CAICLSRCRRKCFTDSCMHQFCFKCLCEWSKIKPECPLCK). The interval 495–682 (AAANAEVAAI…SSDSSTTNSE (188 aa)) is interaction with hairy/hry. Disordered regions lie at residues 627 to 858 (DQLR…SSTA) and 972 to 1038 (GESE…LLPY). Residues 633 to 642 (RSIRSKKSRR) are compositionally biased toward basic residues. The segment covering 643–668 (SSMPARSDSGSSPSSCSSSSFHFSSS) has biased composition (low complexity). Residues 686 to 699 (KKSRKRVANNKRSK) show a composition bias toward basic residues. Positions 723 to 744 (QQQISQKKPQRQPESSSDSPSS) are enriched in low complexity. A compositionally biased stretch (basic and acidic residues) spans 792–801 (ATLEDRKPVK). T820 is modified (phosphothreonine). S822 carries the post-translational modification Phosphoserine. The segment covering 841-858 (SHSNQSSQSASLASSSTA) has biased composition (low complexity). Over residues 987–1031 (EEQDEEDEEDEDQEEDDQEEEKAAEEEEEEEEDDDDSDNHDENDE) the composition is skewed to acidic residues.

As to quaternary structure, interacts with hairy/hry, p53 and Top1. Interacts with the gypsy chromatin insulator complex, composed of Cp190, mod(mdg4) and su(Hw); interacts directly with mod(mdg4) and su(Hw). Interacts with Lam/lamin.

It localises to the nucleus. The protein resides in the chromosome. It carries out the reaction S-ubiquitinyl-[E2 ubiquitin-conjugating enzyme]-L-cysteine + [acceptor protein]-L-lysine = [E2 ubiquitin-conjugating enzyme]-L-cysteine + N(6)-ubiquitinyl-[acceptor protein]-L-lysine.. Functions as a ubiquitin-protein E3 ligase. Negatively regulates the transcriptional repressor hairy/hry by promoting its ubiquitination and subsequent degradation. Also directs the nuclear organization of the gypsy chromatin insulator. Chromatin insulators are regulatory elements which establish independent domains of transcriptional activity within eukaryotic genomes. Insulators have two defining properties; they can block the communication between an enhancer and a promoter when placed between them, and can also buffer transgenes from position effect variegation (PEV). Insulators are proposed to structure the chromatin fiber into independent domains of differing transcriptional potential by promoting the formation of distinct chromatin loops. This chromatin looping may require the formation of insulator bodies, where homotypic interactions between individual subunits of the insulator complex could promote the clustering of widely spaced insulators at the nuclear periphery. Within the gypsy insulator complex, this protein may promote formation of nuclear insulator bodies by recruiting individual insulator complexes to the nuclear lamina. The protein is E3 ubiquitin-protein ligase Topors (Topors) of Drosophila melanogaster (Fruit fly).